We begin with the raw amino-acid sequence, 652 residues long: Putative ankyrin repeat protein R734 (652 aa).

ANK repeat units lie at residues 77–105 (TNDI…ANNS), 106–136 (EGIK…LPTE), 138–167 (TLRD…HLGY), 192–219 (NDLK…SGYE), 220–242 (FDNR…FFMD), 243–274 (IGFD…QFTQ), 307–337 (INDN…NINR), 396–430 (SDNN…DPNY), 468–498 (PKLT…TIYS), and 535–564 (TNKS…DNNL).

This chain is Putative ankyrin repeat protein R734, found in Acanthamoeba polyphaga mimivirus (APMV).